The sequence spans 222 residues: MTENRQLGALLAACHWIGEKGWCPATGGNMSLRLDLAHCLITESGKDKGSLAAEDFLLVETANNHVPSGRTPSAETGLHTLLYRLYPEIQAVLHTHSVNATVLSRVERSNALVLQGYEMQKSLSGQRSHLDAVVIPIFDNDQDIPVLAQRVAAYADNRPLQYGFLVRGHGLYCWGNSVVEARRHLEGLEFLFQCELQRRLFDVNSNVDVKPNVDVNPNVEAK.

Positions 94 and 96 each coordinate Zn(2+).

The protein belongs to the aldolase class II family. MtnB subfamily. It depends on Zn(2+) as a cofactor.

The catalysed reaction is 5-(methylsulfanyl)-D-ribulose 1-phosphate = 5-methylsulfanyl-2,3-dioxopentyl phosphate + H2O. It participates in amino-acid biosynthesis; L-methionine biosynthesis via salvage pathway; L-methionine from S-methyl-5-thio-alpha-D-ribose 1-phosphate: step 2/6. Functionally, catalyzes the dehydration of methylthioribulose-1-phosphate (MTRu-1-P) into 2,3-diketo-5-methylthiopentyl-1-phosphate (DK-MTP-1-P). The polypeptide is Methylthioribulose-1-phosphate dehydratase (Yersinia pseudotuberculosis serotype IB (strain PB1/+)).